We begin with the raw amino-acid sequence, 345 residues long: Trace amine-associated receptor 6 (345 aa).

Residues 1–32 (MGSNSSPPAVLQLCYENVNGSCVKTPYSPGPR) lie on the Extracellular side of the membrane. The N-linked (GlcNAc...) asparagine glycan is linked to Asn19. 2 disulfide bridges follow: Cys22-Cys186 and Cys105-Cys190. A helical membrane pass occupies residues 33 to 53 (VLLYAVFGFGAVLAVFGNLLV). At 54–68 (MISILHFKQLHSPTN) the chain is on the cytoplasmic side. Residues 69–89 (FLIASLACADFWVGVSVMPFS) form a helical membrane-spanning segment. Residues 90–107 (MVRSIESCWYFGRSFCTF) are Extracellular-facing. Residues 108 to 128 (HTCCDVAFCYSSLFHLSFISI) traverse the membrane as a helical segment. Over 129–147 (DRYIAVTDPLVYPTKFTVS) the chain is Cytoplasmic. The helical transmembrane segment at 148–168 (VSGICISISWILPLAYSGAVF) threads the bilayer. Topologically, residues 169 to 202 (YTGVYADGLEEVSDAVNCVGGCQVVVNQNWVLID) are extracellular. A helical membrane pass occupies residues 203–223 (FLSFLIPTLVMIILYGNIFLV). The Cytoplasmic portion of the chain corresponds to 224–259 (ARQQAKKIETVGNKAESSSESYKARVARRERKAAKT). The chain crosses the membrane as a helical span at residues 260–276 (LGITVVAFMISWLPYSI). The Extracellular portion of the chain corresponds to 277–282 (DSLVDA). Residues 283–302 (FMGFITPAYIYEICVWCAYY) traverse the membrane as a helical segment. Topologically, residues 303-345 (NSAMNPLIYALFYPWFKKAIKVIMSGQVFKNSSATMNLFSEQI) are cytoplasmic.

It belongs to the G-protein coupled receptor 1 family.

It localises to the cell membrane. In terms of biological role, olfactory receptor specific for trace amines, such as beta-phenylethylamine (beta-PEA). Trace amine compounds are enriched in animal body fluids and act on trace amine-associated receptors (TAARs) to elicit both intraspecific and interspecific innate behaviors. Beta-PEA-binding causes a conformation change that triggers signaling via G(s)-class of G alpha proteins (GNAL or GNAS). This is Trace amine-associated receptor 6 (Taar6) from Rattus norvegicus (Rat).